We begin with the raw amino-acid sequence, 142 residues long: Hemoglobin subunit alpha (142 aa).

The 141-residue stretch at 2-142 (VLSDANKQEI…LVHQLSSKYR (141 aa)) folds into the Globin domain. His60 is an O2 binding site. Position 89 (His89) interacts with heme b.

The protein belongs to the globin family. In terms of assembly, heterotetramer of two alpha chains and two beta chains. As to expression, red blood cells.

Involved in oxygen transport from gills to the various peripheral tissues. This is Hemoglobin subunit alpha (HBA) from Bathyraja eatonii (Eaton's skate).